The primary structure comprises 582 residues: BTB/POZ domain and ankyrin repeat-containing protein NPR1 (582 aa).

The segment covering 1–12 has biased composition (polar residues); the sequence is MEPPTSHVTNAF. The interval 1-27 is disordered; sequence MEPPTSHVTNAFSDSDSASVEEGDADA. The BTB domain maps to 55 to 140; sequence ADARIAVPGG…VLDYLYSGRV (86 aa). A C2HC NPR-type zinc finger spans residues 147-161; the sequence is ACLCVDEDCAHVGCH. Zn(2+) is bound by residues C150, C155, H157, and C160. ANK repeat units follow at residues 229-258, 269-299, 301-328, and 332-361; these read RSNL…SLGL, KHVR…NLDD, FALH…DVNH, and RGYT…RPAD. The salicylic acid-binding core (SBC) stretch occupies residues 391–526; the sequence is PSPKDRLCIE…VLDKIMDDET (136 aa). R436 contributes to the salicylate binding site. Disordered regions lie at residues 525-544 and 551-582; these read ETDP…KRFH and QKAF…RPRR. Residues 553 to 563 are compositionally biased toward basic and acidic residues; the sequence is AFHEDKEENDR. Residues 564–574 show a composition bias toward low complexity; sequence SGLSSSSSSTS.

Belongs to the plant 'ANKYRIN-BTB/POZ' family. 'NPR1-like' subfamily. In terms of assembly, oligomer in an uninduced state; disulfide-linked. Forms activated monomer upon changes in cellular redox potential. Interacts with TGA2.2. Interacts with NRR.

Its subcellular location is the cytoplasm. The protein localises to the nucleus. The protein resides in the nuclear body. Its pathway is protein modification; protein ubiquitination. In terms of biological role, salicylic acid (SA)-binding substrate-specific adapter of an E3 ubiquitin-protein ligase complex (CUL3-RBX1-BTB) which mediates the ubiquitination and subsequent proteasomal degradation of target proteins. Transcription cofactor that represses gene expression in the absence of salicylic acid (SA), when attached to negative cis-elements (W-box) with WRKY transcription factors, but stimulates gene expression upon activation by SA, when sumoylated and attached to positive cis-elements (as-1) with TGA transcription factors, thus confering immunity through a series of gene regulations ending in a significant increase in antimicrobial and defense genes expression. Key positive factor of disease resistance. Involved in defense response against the bacterial blight disease caused by Xanthomonas oryzae pv. oryzae (Xoo). Plants over-expressing NPR1/NH1 acquire high levels of resistance to Xoo, express constitutively defense genes and develop lesion-mimic spots on leaves at pre-flowering stage. Involved in basal resistance to the blast pathogen Magnaporthe oryzae. Plants over-expressing NPR1/NH1 have increased resistance to M.oryzae infection. Plays an essential role in benzothiadiazole (BTH)-induced resistance to the blast fungus disease caused by Magnaporthe oryzae. Functions as a transcriptional coactivator of TGA2.1 and LG2 in vitro. Involved in defense response against herbivore. Plants silencing NPR1/NH1 have increased herbivore-induced trypsin proteinase inhibitors and volatiles, which reduces the performance of the striped stem borer (SSB) Chilo suppressalis. The chain is BTB/POZ domain and ankyrin repeat-containing protein NPR1 from Oryza sativa subsp. indica (Rice).